A 229-amino-acid chain; its full sequence is Ribonuclease 3 (229 aa).

The RNase III domain maps to 5–127; the sequence is LARLERKLGY…LIGAIYLDAD (123 aa). Glutamate 40 lines the Mg(2+) pocket. The active site involves aspartate 44. 2 residues coordinate Mg(2+): aspartate 113 and glutamate 116. Glutamate 116 is an active-site residue. Residues 154-224 form the DRBM domain; it reads DPKTRLQEFL…AAAALIALGV (71 aa).

Belongs to the ribonuclease III family. As to quaternary structure, homodimer. The cofactor is Mg(2+).

It localises to the cytoplasm. It carries out the reaction Endonucleolytic cleavage to 5'-phosphomonoester.. Functionally, digests double-stranded RNA. Involved in the processing of primary rRNA transcript to yield the immediate precursors to the large and small rRNAs (23S and 16S). Processes some mRNAs, and tRNAs when they are encoded in the rRNA operon. Processes pre-crRNA and tracrRNA of type II CRISPR loci if present in the organism. The protein is Ribonuclease 3 of Pseudomonas putida (strain W619).